The sequence spans 289 residues: 26S proteasome non-ATPase regulatory subunit 8 (289 aa).

Residue Ser45 is modified to Phosphoserine. Positions 101–270 constitute a PCI domain; it reads PSFERYMAQL…QQKPEDTTIP (170 aa). Lys236 is covalently cross-linked (Glycyl lysine isopeptide (Lys-Gly) (interchain with G-Cter in SUMO2)).

This sequence belongs to the proteasome subunit S14 family. In terms of assembly, component of the 19S proteasome regulatory particle complex. The 26S proteasome consists of a 20S core particle (CP) and two 19S regulatory subunits (RP). The regulatory particle is made of a lid composed of 9 subunits including PSMD8, a base containing 6 ATPases and few additional components. Interacts with DDI2. Interacts with TASOR.

Functionally, component of the 26S proteasome, a multiprotein complex involved in the ATP-dependent degradation of ubiquitinated proteins. This complex plays a key role in the maintenance of protein homeostasis by removing misfolded or damaged proteins, which could impair cellular functions, and by removing proteins whose functions are no longer required. Therefore, the proteasome participates in numerous cellular processes, including cell cycle progression, apoptosis, or DNA damage repair. This Pongo abelii (Sumatran orangutan) protein is 26S proteasome non-ATPase regulatory subunit 8 (PSMD8).